The following is an 810-amino-acid chain: Lon protease (810 aa).

A Lon N-terminal domain is found at 40 to 233 (LIIVPVRGFV…MVAKLLAQRI (194 aa)). 385-392 (GPPGVGKT) contacts ATP. A Lon proteolytic domain is found at 621-802 (LSVPGVATGL…DDAMAAAFEG (182 aa)). Active-site residues include Ser708 and Lys751.

The protein belongs to the peptidase S16 family. Homohexamer. Organized in a ring with a central cavity.

Its subcellular location is the cytoplasm. The enzyme catalyses Hydrolysis of proteins in presence of ATP.. Functionally, ATP-dependent serine protease that mediates the selective degradation of mutant and abnormal proteins as well as certain short-lived regulatory proteins. Required for cellular homeostasis and for survival from DNA damage and developmental changes induced by stress. Degrades polypeptides processively to yield small peptide fragments that are 5 to 10 amino acids long. Binds to DNA in a double-stranded, site-specific manner. The sequence is that of Lon protease from Methylocella silvestris (strain DSM 15510 / CIP 108128 / LMG 27833 / NCIMB 13906 / BL2).